The primary structure comprises 86 residues: Venom metalloproteinase (86 aa).

Position 7 (D7) interacts with Ca(2+). H67 serves as a coordination point for Zn(2+). The active site involves E68. Zn(2+)-binding residues include H71 and H77.

Belongs to the venom metalloproteinase (M12B) family. Zn(2+) is required as a cofactor. As to expression, expressed by the venom gland.

It is found in the secreted. This is Venom metalloproteinase from Tityus serrulatus (Brazilian scorpion).